Here is a 70-residue protein sequence, read N- to C-terminus: Small ribosomal subunit protein bS21B (70 aa).

Belongs to the bacterial ribosomal protein bS21 family.

The polypeptide is Small ribosomal subunit protein bS21B (Paraburkholderia xenovorans (strain LB400)).